Reading from the N-terminus, the 340-residue chain is Protein-arginine kinase (340 aa).

One can recognise a Phosphagen kinase C-terminal domain in the interval 21-242 (VVLSSRIRLA…EQIIMQERVA (222 aa)). Residues 24-28 (SSRIR), His79, Arg113, 164-168 (RASVM), and 195-200 (RGIYGE) contribute to the ATP site.

Belongs to the ATP:guanido phosphotransferase family.

The catalysed reaction is L-arginyl-[protein] + ATP = N(omega)-phospho-L-arginyl-[protein] + ADP + H(+). Its function is as follows. Catalyzes the specific phosphorylation of arginine residues in proteins. The sequence is that of Protein-arginine kinase from Listeria monocytogenes serotype 4b (strain F2365).